Reading from the N-terminus, the 162-residue chain is Ribosome maturation factor RimP (162 aa).

Belongs to the RimP family.

It localises to the cytoplasm. Required for maturation of 30S ribosomal subunits. The chain is Ribosome maturation factor RimP from Ralstonia nicotianae (strain ATCC BAA-1114 / GMI1000) (Ralstonia solanacearum).